Reading from the N-terminus, the 985-residue chain is Disease resistance protein At4g27190 (985 aa).

A coiled-coil region spans residues A24–E88. Residues I167–G429 enclose the NB-ARC domain. Position 171–178 (G171–T178) interacts with ATP. LRR repeat units lie at residues S502 to F523, K526 to Q547, T551 to R572, S575 to A597, K598 to K620, and R621 to R643.

Belongs to the disease resistance NB-LRR family.

Functionally, disease resistance protein. This Arabidopsis thaliana (Mouse-ear cress) protein is Disease resistance protein At4g27190.